The primary structure comprises 161 residues: Putative 4-hydroxy-4-methyl-2-oxoglutarate aldolase (161 aa).

Substrate contacts are provided by residues 75–78 (GDNL) and Arg97. A divalent metal cation is bound at residue Asp98.

Belongs to the class II aldolase/RraA-like family. As to quaternary structure, homotrimer. It depends on a divalent metal cation as a cofactor.

The catalysed reaction is 4-hydroxy-4-methyl-2-oxoglutarate = 2 pyruvate. The enzyme catalyses oxaloacetate + H(+) = pyruvate + CO2. Its function is as follows. Catalyzes the aldol cleavage of 4-hydroxy-4-methyl-2-oxoglutarate (HMG) into 2 molecules of pyruvate. Also contains a secondary oxaloacetate (OAA) decarboxylase activity due to the common pyruvate enolate transition state formed following C-C bond cleavage in the retro-aldol and decarboxylation reactions. The sequence is that of Putative 4-hydroxy-4-methyl-2-oxoglutarate aldolase from Alkalilimnicola ehrlichii (strain ATCC BAA-1101 / DSM 17681 / MLHE-1).